Consider the following 348-residue polypeptide: tRNA (cytosine(34)-C(5))-methyltransferase, mitochondrial (348 aa).

Residues cysteine 139–lysine 145, glutamate 162, aspartate 193, and aspartate 211 contribute to the S-adenosyl-L-methionine site. Catalysis depends on cysteine 265, which acts as the Nucleophile.

It belongs to the class I-like SAM-binding methyltransferase superfamily. RsmB/NOP family.

It is found in the mitochondrion matrix. The enzyme catalyses cytidine(34) in mitochondrial tRNA + S-adenosyl-L-methionine = 5-methylcytidine(34) in mitochondrial tRNA + S-adenosyl-L-homocysteine + H(+). In terms of biological role, mitochondrial tRNA methyltransferase that mediates methylation of cytosine to 5-methylcytosine (m5C) at position 34 of mt-tRNA(Met). mt-tRNA(Met) methylation at cytosine(34) takes place at the wobble position of the anticodon and initiates the formation of 5-formylcytosine (f(5)c) at this position. mt-tRNA(Met) containing the f(5)c modification at the wobble position enables recognition of the AUA codon in addition to the AUG codon, expanding codon recognition in mitochondrial translation. This chain is tRNA (cytosine(34)-C(5))-methyltransferase, mitochondrial, found in Mus musculus (Mouse).